Consider the following 468-residue polypeptide: Midnolin (468 aa).

The Ubiquitin-like domain maps to 31-105 (MSLAIHSTTG…LTLVPTVEAG (75 aa)). Disordered stretches follow at residues 182-264 (PSIA…RSRK) and 404-447 (LRRK…LGLD). Over residues 185 to 201 (ASPVSSPCRPVSSAARV) the composition is skewed to low complexity. The span at 202 to 213 (PPVPTSPSPASP) shows a compositional bias: pro residues. Low complexity-rich tracts occupy residues 237 to 260 (SPTA…SPAP) and 419 to 431 (SPSR…DSSS).

In terms of assembly, interacts with GCK; the interaction occurs preferentially at low glucose levels. Interacts with the proteasome.

It is found in the nucleus. The protein resides in the nucleolus. It localises to the cytoplasm. The protein localises to the cytosol. Functionally, facilitates the ubiquitin-independent proteasomal degradation of stimulus-induced transcription factors such as FOSB, EGR1, NR4A1, and IRF4 to the proteasome for degradation. Promotes also the degradation of other substrates such as CBX4. Plays a role in inhibiting the activity of glucokinase GCK and both glucose-induced and basal insulin secretion. This is Midnolin (MIDN) from Homo sapiens (Human).